Reading from the N-terminus, the 152-residue chain is Ribonuclease H (152 aa).

The 142-residue stretch at 1–142 (MNSKVVIYTD…ADKLAVQGRE (142 aa)) folds into the RNase H type-1 domain. Mg(2+)-binding residues include D10, E48, D70, and D134.

The protein belongs to the RNase H family. Monomer. Mg(2+) serves as cofactor.

It is found in the cytoplasm. The catalysed reaction is Endonucleolytic cleavage to 5'-phosphomonoester.. Its function is as follows. Endonuclease that specifically degrades the RNA of RNA-DNA hybrids. This is Ribonuclease H from Rickettsia akari (strain Hartford).